The following is a 207-amino-acid chain: Ribonuclease HII (207 aa).

The 189-residue stretch at 18 to 206 folds into the RNase H type-2 domain; that stretch reads EFIVGVDEVG…VKNILQLLEK (189 aa). Residues D24, E25, and D115 each coordinate a divalent metal cation.

This sequence belongs to the RNase HII family. It depends on Mn(2+) as a cofactor. Mg(2+) is required as a cofactor.

The protein localises to the cytoplasm. It catalyses the reaction Endonucleolytic cleavage to 5'-phosphomonoester.. Functionally, endonuclease that specifically degrades the RNA of RNA-DNA hybrids. The protein is Ribonuclease HII of Hydrogenovibrio crunogenus (strain DSM 25203 / XCL-2) (Thiomicrospira crunogena).